A 603-amino-acid polypeptide reads, in one-letter code: DNA mismatch repair protein MutL (603 aa).

This sequence belongs to the DNA mismatch repair MutL/HexB family.

Its function is as follows. This protein is involved in the repair of mismatches in DNA. It is required for dam-dependent methyl-directed DNA mismatch repair. May act as a 'molecular matchmaker', a protein that promotes the formation of a stable complex between two or more DNA-binding proteins in an ATP-dependent manner without itself being part of a final effector complex. In Listeria monocytogenes serotype 4a (strain HCC23), this protein is DNA mismatch repair protein MutL.